Reading from the N-terminus, the 244-residue chain is High frequency lysogenization protein HflD homolog (244 aa).

The protein belongs to the HflD family.

It is found in the cytoplasm. The protein resides in the cell inner membrane. This chain is High frequency lysogenization protein HflD homolog, found in Acinetobacter baumannii (strain SDF).